Consider the following 140-residue polypeptide: Ribosome-binding factor A (140 aa).

Positions lysine 121–serine 140 are disordered.

This sequence belongs to the RbfA family. In terms of assembly, monomer. Binds 30S ribosomal subunits, but not 50S ribosomal subunits or 70S ribosomes.

It localises to the cytoplasm. One of several proteins that assist in the late maturation steps of the functional core of the 30S ribosomal subunit. Associates with free 30S ribosomal subunits (but not with 30S subunits that are part of 70S ribosomes or polysomes). Required for efficient processing of 16S rRNA. May interact with the 5'-terminal helix region of 16S rRNA. The polypeptide is Ribosome-binding factor A (Psychrobacter sp. (strain PRwf-1)).